Here is a 506-residue protein sequence, read N- to C-terminus: Probable malate:quinone oxidoreductase (506 aa).

This sequence belongs to the MQO family. Requires FAD as cofactor.

The catalysed reaction is (S)-malate + a quinone = a quinol + oxaloacetate. Its pathway is carbohydrate metabolism; tricarboxylic acid cycle; oxaloacetate from (S)-malate (quinone route): step 1/1. The chain is Probable malate:quinone oxidoreductase from Rhodococcus jostii (strain RHA1).